Here is a 606-residue protein sequence, read N- to C-terminus: Envelope glycoprotein gp95 (606 aa).

The first 62 residues, 1 to 62 (MEAVIKAFLT…VLCEVTGVRA (62 aa)), serve as a signal peptide directing secretion. Residues 63 to 552 (DVHLLEQPGN…EWAVHLLKGL (490 aa)) are Extracellular-facing. N-linked (GlcNAc...) asparagine; by host glycans are attached at residues Asn79, Asn120, Asn141, Asn158, and Asn178. 7 cysteine pairs are disulfide-bonded: Cys87-Cys499, Cys121-Cys152, Cys192-Cys245, Cys258-Cys267, Cys353-Cys370, Cys410-Cys446, and Cys491-Cys498. The tract at residues 185 to 226 (ISGITGGCVGFRPQGVPWYLGWSRQEATRFLLRHPSFSKSTE) is binding to host receptor. Asn257 carries N-linked (GlcNAc...) asparagine; by host glycosylation. A binding to host receptor region spans residues 261–288 (VGRQYRCGNARSPRPGLPEIQCTRRGGK). N-linked (GlcNAc...) asparagine; by host glycosylation is found at Asn291, Asn297, Asn307, and Asn315. An N-linked (GlcNAc...) asparagine; by host glycan is attached at Asn391. Residues 418 to 438 (GPTARIFASILAPGVARAQAL) form a fusion peptide region. Residues 435 to 485 (AQALREIERLACWSVKQANLTTSFLGDLLDDVTSIRHAVLQNRAAIDFLLL) adopt a coiled-coil conformation. An N-linked (GlcNAc...) asparagine; by host glycan is attached at Asn453. The segment at 474-490 (LQNRAAIDFLLLAHGHG) is immunosuppression. An N-linked (GlcNAc...) asparagine; by host glycan is attached at Asn501. Residues 503–533 (SDHSESIQKKFQLMKEHVNKIGVDSDPIGSW) are a coiled coil. A helical membrane pass occupies residues 553-573 (LLGLVVILLLVVCLPCLLQIV). 2 S-palmitoyl cysteine; by host lipidation sites follow: Cys565 and Cys568. Over 574–606 (CGNIRKMINNSISYHTEYKKLQKACGQPESRIV) the chain is Cytoplasmic.

The protein belongs to the Alpharetroviruses envelope glycoprotein family. Heterodimer with the transmembrane protein. The mature envelope protein (Env) consists of a trimer of SU-TM heterodimers attached by a labile interchain disulfide bond. Interacts with the host cell entry receptor TVA isoforms pg900 and pg800; this interaction allows the viral attachment. In terms of assembly, heterodimer with the surface protein. The mature envelope protein (Env) consists of a trimer of SU-TM heterodimers attached by a labile interchain disulfide bond. In terms of processing, specific enzymatic cleavages in vivo yield mature proteins. Envelope glycoproteins are synthesized as an inactive precursor that is N-glycosylated and processed likely by host cell furin or by a furin-like protease in the Golgi to yield the mature SU and TM proteins. The cleavage site between SU and TM requires the minimal sequence [KR]-X-[KR]-R. Post-translationally, the transmembrane protein is palmitoylated. Palmitoylation is necessary for glycoprotein function and infectivity.

Its subcellular location is the virion membrane. It is found in the host cell membrane. In terms of biological role, the surface protein (SU) attaches the virus to the host cell entry receptor TVA. This interaction triggers the refolding of the transmembrane protein (TM) thereby unmasking its fusion peptide and the formation of a reactive thiolate on Cys-100 to activate its fusogenic potential. Fusion occurs at the host cell plasma membrane. The transmembrane protein (TM) acts as a class I viral fusion protein. Under the current model, the protein has at least 3 conformational states: pre-fusion native state, pre-hairpin intermediate state, and post-fusion hairpin state. During viral and target cell membrane fusion, the coiled coil regions (heptad repeats) assume a trimer-of-hairpins structure, positioning the fusion peptide in close proximity to the C-terminal region of the ectodomain. The formation of this structure appears to drive apposition and subsequent fusion of viral and target cell membranes. Membranes fusion leads to delivery of the nucleocapsid into the cytoplasm. This Avian leukosis virus subgroup A (isolate RSA) (ALV-A RSA) protein is Envelope glycoprotein gp95 (env).